Here is a 96-residue protein sequence, read N- to C-terminus: Co-chaperonin GroES (96 aa).

The protein belongs to the GroES chaperonin family. Heptamer of 7 subunits arranged in a ring. Interacts with the chaperonin GroEL.

It is found in the cytoplasm. Functionally, together with the chaperonin GroEL, plays an essential role in assisting protein folding. The GroEL-GroES system forms a nano-cage that allows encapsulation of the non-native substrate proteins and provides a physical environment optimized to promote and accelerate protein folding. GroES binds to the apical surface of the GroEL ring, thereby capping the opening of the GroEL channel. The chain is Co-chaperonin GroES from Legionella micdadei (Tatlockia micdadei).